Reading from the N-terminus, the 347-residue chain is Ribosomal RNA large subunit methyltransferase M (347 aa).

S-adenosyl-L-methionine contacts are provided by residues Ser-184, Ala-217–Gly-220, Asp-236, Asp-256, and Asp-272. Lys-301 serves as the catalytic Proton acceptor.

This sequence belongs to the class I-like SAM-binding methyltransferase superfamily. RNA methyltransferase RlmE family. RlmM subfamily. Monomer.

Its subcellular location is the cytoplasm. The catalysed reaction is cytidine(2498) in 23S rRNA + S-adenosyl-L-methionine = 2'-O-methylcytidine(2498) in 23S rRNA + S-adenosyl-L-homocysteine + H(+). In terms of biological role, catalyzes the 2'-O-methylation at nucleotide C2498 in 23S rRNA. This is Ribosomal RNA large subunit methyltransferase M from Xanthomonas euvesicatoria pv. vesicatoria (strain 85-10) (Xanthomonas campestris pv. vesicatoria).